Consider the following 432-residue polypeptide: Trigger factor (432 aa).

The 86-residue stretch at 165 to 250 (GDFAKIDFEG…LKEIQVKAPQ (86 aa)) folds into the PPIase FKBP-type domain.

It belongs to the FKBP-type PPIase family. Tig subfamily.

The protein resides in the cytoplasm. It carries out the reaction [protein]-peptidylproline (omega=180) = [protein]-peptidylproline (omega=0). Involved in protein export. Acts as a chaperone by maintaining the newly synthesized protein in an open conformation. Functions as a peptidyl-prolyl cis-trans isomerase. The polypeptide is Trigger factor (Wolinella succinogenes (strain ATCC 29543 / DSM 1740 / CCUG 13145 / JCM 31913 / LMG 7466 / NCTC 11488 / FDC 602W) (Vibrio succinogenes)).